The sequence spans 363 residues: Heat-inducible transcription repressor HrcA (363 aa).

Belongs to the HrcA family.

Its function is as follows. Negative regulator of class I heat shock genes (grpE-dnaK-dnaJ and groELS operons). Prevents heat-shock induction of these operons. This is Heat-inducible transcription repressor HrcA from Rhizobium radiobacter (Agrobacterium tumefaciens).